The chain runs to 154 residues: Basic phospholipase A2 PC20 (154 aa).

The N-terminal stretch at M1–A21 is a signal peptide. Positions I22 to L27 are excised as a propeptide. 7 disulfides stabilise this stretch: C38/C98, C54/C143, C56/C72, C71/C125, C78/C118, C87/C111, and C105/C116. Ca(2+) contacts are provided by Y55, S57, and G59. H75 is an active-site residue. Position 76 (D76) interacts with Ca(2+). Residue D119 is part of the active site.

Belongs to the phospholipase A2 family. Group I subfamily. D49 sub-subfamily. Ca(2+) is required as a cofactor. In terms of tissue distribution, expressed by the venom gland.

The protein resides in the secreted. The enzyme catalyses a 1,2-diacyl-sn-glycero-3-phosphocholine + H2O = a 1-acyl-sn-glycero-3-phosphocholine + a fatty acid + H(+). In terms of biological role, snake venom phospholipase A2 (PLA2) that inhibits neuromuscular transmission by blocking acetylcholine release from the nerve termini. PLA2 catalyzes the calcium-dependent hydrolysis of the 2-acyl groups in 3-sn-phosphoglycerides. In Laticauda colubrina (Yellow-lipped sea krait), this protein is Basic phospholipase A2 PC20.